The sequence spans 95 residues: HssA/B-like protein 45 (95 aa).

Positions 1-31 are disordered; it reads MTLFSSISSISNPMTSSKSSIASFGSGTSMS.

The protein belongs to the hssA/B family.

This chain is HssA/B-like protein 45 (hssl45), found in Dictyostelium discoideum (Social amoeba).